The following is a 232-amino-acid chain: Small ribosomal subunit protein uS3 (232 aa).

One can recognise a KH type-2 domain in the interval Ile-39–Arg-107.

Belongs to the universal ribosomal protein uS3 family. In terms of assembly, part of the 30S ribosomal subunit. Forms a tight complex with proteins S10 and S14.

In terms of biological role, binds the lower part of the 30S subunit head. Binds mRNA in the 70S ribosome, positioning it for translation. This chain is Small ribosomal subunit protein uS3, found in Rhodopseudomonas palustris (strain BisB18).